The primary structure comprises 388 residues: Chorismate synthase (388 aa).

Residues R39 and R45 each contribute to the NADP(+) site. Residues 130–132, 251–252, G296, 311–315, and R337 contribute to the FMN site; these read RSS, NA, and KPIPT.

This sequence belongs to the chorismate synthase family. In terms of assembly, homotetramer. FMNH2 serves as cofactor.

The catalysed reaction is 5-O-(1-carboxyvinyl)-3-phosphoshikimate = chorismate + phosphate. The protein operates within metabolic intermediate biosynthesis; chorismate biosynthesis; chorismate from D-erythrose 4-phosphate and phosphoenolpyruvate: step 7/7. Its function is as follows. Catalyzes the anti-1,4-elimination of the C-3 phosphate and the C-6 proR hydrogen from 5-enolpyruvylshikimate-3-phosphate (EPSP) to yield chorismate, which is the branch point compound that serves as the starting substrate for the three terminal pathways of aromatic amino acid biosynthesis. This reaction introduces a second double bond into the aromatic ring system. The protein is Chorismate synthase of Streptococcus pneumoniae serotype 2 (strain D39 / NCTC 7466).